Here is a 567-residue protein sequence, read N- to C-terminus: Zinc finger protein 143 (567 aa).

7 consecutive C2H2-type zinc fingers follow at residues 230 to 254, 260 to 284, 290 to 314, 320 to 344, 350 to 374, 380 to 404, and 410 to 433; these read FRCD…ERSH, YQCD…VRTH, YRCS…VRTH, FKCP…IRTH, YYCS…VRIH, YVCT…HVVH, and YNCN…RTAH. A compositionally biased stretch (polar residues) spans 506–520; the sequence is SATESGPQHSHNLGG. Residues 506 to 525 are disordered; the sequence is SATESGPQHSHNLGGSESRP.

Belongs to the GLI C2H2-type zinc-finger protein family.

Its subcellular location is the nucleus. Transcriptional activator. Activates the gene for selenocysteine tRNA (tRNAsec). Binds to the activator element (AE) motif of the selenocysteine tRNA gene promoter. The chain is Zinc finger protein 143 (znf143) from Xenopus tropicalis (Western clawed frog).